Consider the following 365-residue polypeptide: NAD(P)H-quinone oxidoreductase subunit 1, chloroplastic (365 aa).

The next 6 membrane-spanning stretches (helical) occupy residues 29 to 49 (IWLLVPIFTLILVIIIGVLVI), 106 to 126 (IAVISTLLSYLVIPFGYHLVL), 129 to 149 (LSIGVFLWIAISSIAPIGLLM), 250 to 270 (YSGIKFGLFYVASYLNLLVSS), 302 to 322 (IFGMTIGILITLAKAYLFLFI), and 338 to 358 (LLNLGWKFLLPISLGNLLLTT).

Belongs to the complex I subunit 1 family. In terms of assembly, NDH is composed of at least 16 different subunits, 5 of which are encoded in the nucleus.

Its subcellular location is the plastid. It localises to the chloroplast thylakoid membrane. It catalyses the reaction a plastoquinone + NADH + (n+1) H(+)(in) = a plastoquinol + NAD(+) + n H(+)(out). The enzyme catalyses a plastoquinone + NADPH + (n+1) H(+)(in) = a plastoquinol + NADP(+) + n H(+)(out). Functionally, NDH shuttles electrons from NAD(P)H:plastoquinone, via FMN and iron-sulfur (Fe-S) centers, to quinones in the photosynthetic chain and possibly in a chloroplast respiratory chain. The immediate electron acceptor for the enzyme in this species is believed to be plastoquinone. Couples the redox reaction to proton translocation, and thus conserves the redox energy in a proton gradient. The sequence is that of NAD(P)H-quinone oxidoreductase subunit 1, chloroplastic from Acorus calamus (Sweet flag).